The primary structure comprises 166 residues: Chemoreceptor glutamine deamidase CheD (166 aa).

This sequence belongs to the CheD family. Forms a complex with CheC.

The catalysed reaction is L-glutaminyl-[protein] + H2O = L-glutamyl-[protein] + NH4(+). Functionally, deamidates glutamine residues to glutamate on methyl-accepting chemotaxis receptors (MCPs). CheD-mediated MCP deamidation is required for productive communication of the conformational signals of the chemoreceptors to the CheA kinase. The chain is Chemoreceptor glutamine deamidase CheD from Bacillus velezensis (strain DSM 23117 / BGSC 10A6 / LMG 26770 / FZB42) (Bacillus amyloliquefaciens subsp. plantarum).